Reading from the N-terminus, the 311-residue chain is Ribosomal RNA small subunit methyltransferase H (311 aa).

Residues 33–35 (AGH), Asp-53, Phe-80, Asp-101, and Gln-108 contribute to the S-adenosyl-L-methionine site.

Belongs to the methyltransferase superfamily. RsmH family.

Its subcellular location is the cytoplasm. The enzyme catalyses cytidine(1402) in 16S rRNA + S-adenosyl-L-methionine = N(4)-methylcytidine(1402) in 16S rRNA + S-adenosyl-L-homocysteine + H(+). Specifically methylates the N4 position of cytidine in position 1402 (C1402) of 16S rRNA. This is Ribosomal RNA small subunit methyltransferase H from Clostridioides difficile (strain 630) (Peptoclostridium difficile).